A 154-amino-acid chain; its full sequence is CASP-like protein 5B2 (154 aa).

At 1 to 17 the chain is on the cytoplasmic side; sequence MAGLAGRPGSWGGLVLR. A helical transmembrane segment spans residues 18-38; sequence VGQALFAAACIGVMGSSLGFA. Residues 39–42 are Extracellular-facing; that stretch reads SYTA. The helical transmembrane segment at 43–63 threads the bilayer; it reads FCYLIASMGLQMLWSFGLACL. The Cytoplasmic portion of the chain corresponds to 64-87; that stretch reads DGYAIRANKDLTSPILLSLFVVGD. A helical transmembrane segment spans residues 88–107; that stretch reads WVTAILSFAASSSAAGVVIL. The Extracellular portion of the chain corresponds to 108–130; it reads FQKDVLFCRRYPQLPCGKYELAT. Residues 131–151 form a helical membrane-spanning segment; the sequence is AFAFLSWALSATSALIMFWLL. At 152 to 154 the chain is on the cytoplasmic side; sequence AAF.

Belongs to the Casparian strip membrane proteins (CASP) family. Homodimer and heterodimers.

It is found in the cell membrane. The polypeptide is CASP-like protein 5B2 (Zea mays (Maize)).